A 520-amino-acid chain; its full sequence is GMP synthase [glutamine-hydrolyzing] (520 aa).

Residues 9 to 202 form the Glutamine amidotransferase type-1 domain; that stretch reads TILIIDFGSQ…VHRIVGVKPG (194 aa). Catalysis depends on Cys86, which acts as the Nucleophile. Active-site residues include His176 and Glu178. The 193-residue stretch at 203–395 folds into the GMPS ATP-PPase domain; sequence WTMGAYREQA…LGLPDSFIGR (193 aa). 230 to 236 serves as a coordination point for ATP; that stretch reads SGGVDSS.

As to quaternary structure, homodimer.

The enzyme catalyses XMP + L-glutamine + ATP + H2O = GMP + L-glutamate + AMP + diphosphate + 2 H(+). It functions in the pathway purine metabolism; GMP biosynthesis; GMP from XMP (L-Gln route): step 1/1. In terms of biological role, catalyzes the synthesis of GMP from XMP. The chain is GMP synthase [glutamine-hydrolyzing] from Brucella melitensis biotype 2 (strain ATCC 23457).